Reading from the N-terminus, the 1207-residue chain is DNA-directed RNA polymerase subunit beta (1207 aa).

It belongs to the RNA polymerase beta chain family. In terms of assembly, the RNAP catalytic core consists of 2 alpha, 1 beta, 1 beta' and 1 omega subunit. When a sigma factor is associated with the core the holoenzyme is formed, which can initiate transcription.

It carries out the reaction RNA(n) + a ribonucleoside 5'-triphosphate = RNA(n+1) + diphosphate. Its function is as follows. DNA-dependent RNA polymerase catalyzes the transcription of DNA into RNA using the four ribonucleoside triphosphates as substrates. This chain is DNA-directed RNA polymerase subunit beta, found in Enterococcus faecalis (strain ATCC 700802 / V583).